A 362-amino-acid chain; its full sequence is Leucoanthocyanidin dioxygenase (362 aa).

The Fe2OG dioxygenase domain maps to 211–313 (MEELLLQKKI…RISWAVFCEP (103 aa)). Residues His238, Asp240, and His294 each coordinate Fe cation.

Belongs to the iron/ascorbate-dependent oxidoreductase family. Fe cation serves as cofactor. The cofactor is L-ascorbate.

It catalyses the reaction a (2R,3S,4S)-leucoanthocyanidin + 2-oxoglutarate + O2 = a 4-H-anthocyanidin with a 3-hydroxy group + succinate + CO2 + 2 H2O. Its pathway is pigment biosynthesis; anthocyanin biosynthesis. Oxidation of leucoanthocyanidins into anthocyanidins. The polypeptide is Leucoanthocyanidin dioxygenase (Vitis vinifera (Grape)).